We begin with the raw amino-acid sequence, 321 residues long: 4-dihydromethyl-trisporate dehydrogenase (321 aa).

Y51 functions as the Proton donor in the catalytic mechanism. Residue H113 participates in substrate binding.

It belongs to the aldo/keto reductase family.

The protein operates within pheromone biosynthesis; trisporate biosynthesis. Functionally, catalyzes the NADP-dependent oxidation of (+) mating-type specific precursor 4-dihydromethyl-trisporate to methyl-trisporate. This chain is 4-dihydromethyl-trisporate dehydrogenase (tdh), found in Mucor mucedo (Common pinmould).